A 297-amino-acid polypeptide reads, in one-letter code: Aspartate carbamoyltransferase catalytic subunit (297 aa).

Positions 49 and 50 each coordinate carbamoyl phosphate. An L-aspartate-binding site is contributed by K77. Residues R99, H129, and Q132 each coordinate carbamoyl phosphate. L-aspartate contacts are provided by R162 and R215. The carbamoyl phosphate site is built by G256 and P257.

This sequence belongs to the aspartate/ornithine carbamoyltransferase superfamily. ATCase family. In terms of assembly, heterododecamer (2C3:3R2) of six catalytic PyrB chains organized as two trimers (C3), and six regulatory PyrI chains organized as three dimers (R2).

The enzyme catalyses carbamoyl phosphate + L-aspartate = N-carbamoyl-L-aspartate + phosphate + H(+). Its pathway is pyrimidine metabolism; UMP biosynthesis via de novo pathway; (S)-dihydroorotate from bicarbonate: step 2/3. Its function is as follows. Catalyzes the condensation of carbamoyl phosphate and aspartate to form carbamoyl aspartate and inorganic phosphate, the committed step in the de novo pyrimidine nucleotide biosynthesis pathway. This chain is Aspartate carbamoyltransferase catalytic subunit, found in Legionella pneumophila (strain Paris).